A 131-amino-acid chain; its full sequence is Cuticle protein 79, isoform B (131 aa).

Repeat copies occupy residues 37–40, 45–48, and 53–56.

Component of the cuticle of migratory locust which contains more than 100 different structural proteins. This is Cuticle protein 79, isoform B from Locusta migratoria (Migratory locust).